An 84-amino-acid chain; its full sequence is Small ribosomal subunit protein uS17 (84 aa).

This sequence belongs to the universal ribosomal protein uS17 family. As to quaternary structure, part of the 30S ribosomal subunit.

Its function is as follows. One of the primary rRNA binding proteins, it binds specifically to the 5'-end of 16S ribosomal RNA. The protein is Small ribosomal subunit protein uS17 of Ureaplasma parvum serovar 3 (strain ATCC 27815 / 27 / NCTC 11736).